A 292-amino-acid chain; its full sequence is Protease HtpX (292 aa).

Helical transmembrane passes span 5–25 (VVLF…VMSV) and 35–55 (GLLV…LLLS). A Zn(2+)-binding site is contributed by His140. Residue Glu141 is part of the active site. Residue His144 participates in Zn(2+) binding. The next 2 membrane-spanning stretches (helical) occupy residues 155-175 (LLQG…GGII) and 193-213 (IIVF…AMWF). Glu218 contributes to the Zn(2+) binding site.

The protein belongs to the peptidase M48B family. It depends on Zn(2+) as a cofactor.

Its subcellular location is the cell inner membrane. The protein is Protease HtpX of Xanthomonas campestris pv. campestris (strain 8004).